Reading from the N-terminus, the 439-residue chain is Serine--tRNA ligase (439 aa).

237 to 239 (TAE) lines the L-serine pocket. 268-270 (RAE) contributes to the ATP binding site. Glu291 lines the L-serine pocket. Residue 362–365 (EISS) coordinates ATP. Ser397 is an L-serine binding site.

The protein belongs to the class-II aminoacyl-tRNA synthetase family. Type-1 seryl-tRNA synthetase subfamily. As to quaternary structure, homodimer. The tRNA molecule binds across the dimer.

The protein localises to the cytoplasm. It catalyses the reaction tRNA(Ser) + L-serine + ATP = L-seryl-tRNA(Ser) + AMP + diphosphate + H(+). The enzyme catalyses tRNA(Sec) + L-serine + ATP = L-seryl-tRNA(Sec) + AMP + diphosphate + H(+). Its pathway is aminoacyl-tRNA biosynthesis; selenocysteinyl-tRNA(Sec) biosynthesis; L-seryl-tRNA(Sec) from L-serine and tRNA(Sec): step 1/1. Its function is as follows. Catalyzes the attachment of serine to tRNA(Ser). Is also able to aminoacylate tRNA(Sec) with serine, to form the misacylated tRNA L-seryl-tRNA(Sec), which will be further converted into selenocysteinyl-tRNA(Sec). The sequence is that of Serine--tRNA ligase from Afipia carboxidovorans (strain ATCC 49405 / DSM 1227 / KCTC 32145 / OM5) (Oligotropha carboxidovorans).